Reading from the N-terminus, the 447-residue chain is Divalent metal cation transporter MntH (447 aa).

The next 11 helical transmembrane spans lie at 26-48 (AGFW…GYMD), 65-85 (TLLS…AMSA), 108-128 (GFLL…AEII), 140-160 (IPLI…LLLM), 169-189 (AIVA…VLLS), 212-232 (MLYL…LYLG), 264-284 (LFLA…LFYG), 304-324 (IVGA…LLAS), 359-379 (VLSV…EAKI), 383-403 (LTFS…PLVI), and 426-446 (TATI…LGLI).

The protein belongs to the NRAMP family.

The protein resides in the cell membrane. H(+)-stimulated, divalent metal cation uptake system. In Pediococcus pentosaceus (strain ATCC 25745 / CCUG 21536 / LMG 10740 / 183-1w), this protein is Divalent metal cation transporter MntH.